The chain runs to 139 residues: Large-conductance mechanosensitive channel (139 aa).

The next 2 helical transmembrane spans lie at 16 to 36 and 79 to 99; these read VIDLAVGVIIGAAFNGIVKSL and GAFVNTVIQFFIVATVVFLLV.

This sequence belongs to the MscL family. Homopentamer.

It localises to the cell inner membrane. Channel that opens in response to stretch forces in the membrane lipid bilayer. May participate in the regulation of osmotic pressure changes within the cell. The chain is Large-conductance mechanosensitive channel from Caulobacter vibrioides (strain ATCC 19089 / CIP 103742 / CB 15) (Caulobacter crescentus).